Consider the following 464-residue polypeptide: Growth hormone-releasing hormone receptor (464 aa).

Residues 1–22 (MDSLLWATWVLCLLNLWGVALG) form the signal peptide. Residues 23–130 (HLHLECDFIT…EEKSYFSTVK (108 aa)) are Extracellular-facing. 3 disulfides stabilise this stretch: C41–C64, C55–C96, and C78–C112. A glycan (N-linked (GlcNAc...) asparagine) is linked at N50. A helical transmembrane segment spans residues 131–151 (IIYTTGHSISIVALCVAIAIL). The Cytoplasmic portion of the chain corresponds to 152 to 167 (VALRRLHCPRNYIHTQ). A helical membrane pass occupies residues 168 to 188 (LFATFILKASAVFLKDAAVFQ). At 189–210 (GDSTDHCSMSTILCKVSVAVSH) the chain is on the extracellular side. Residues 211 to 231 (FATMTNFSWLLAEAVYLSCLL) form a helical membrane-spanning segment. The Cytoplasmic portion of the chain corresponds to 232 to 240 (ASTSPRSKP). A helical membrane pass occupies residues 241 to 261 (AFWWLVLAGWGLPVLCTGTWV). At 262–283 (GCKLAFEDTACWDLDDSSPYWW) the chain is on the extracellular side. The chain crosses the membrane as a helical span at residues 284–304 (IIKGPIVLSVGVNFGLFLNII). At 305 to 372 (CILLRKLGPA…QLPWRLSKST (68 aa)) the chain is on the cytoplasmic side. A helical transmembrane segment spans residues 373-393 (LLLIPLFGIHYIIFNFLPDSA). Residues 394–398 (GLGIR) lie on the Extracellular side of the membrane. The chain crosses the membrane as a helical span at residues 399–419 (LPLELGLGSFQGFVVAVLYCF). Over 420–464 (LNQEVRTEISRKWYGHDPELLPARRTCTEWTTPPRSRVKVLTSEC) the chain is Cytoplasmic.

Belongs to the G-protein coupled receptor 2 family. In terms of tissue distribution, pituitary gland.

Its subcellular location is the cell membrane. Receptor for GRF, coupled to G proteins which activate adenylyl cyclase. Stimulates somatotroph cell growth, growth hormone gene transcription and growth hormone secretion. This is Growth hormone-releasing hormone receptor (Ghrhr) from Rattus norvegicus (Rat).